The following is a 354-amino-acid chain: MDQNKQKALAAALGQIEKQFGKGSIMRLGDSKTMDIEAISTGSLSLDVALGIGGLPCGRIVEIYGPESSGKTTLTLQVIAEAQKKGKTCAFVDAEHALDPIYAAKLGVNVDDLLISQPDTGEQALEICDMLVRSNAVDVIIVDSVAALTPKAEIEGEMGDSHVGLQARLMSQALRKLTANIKNANCLCIFINQIRMKIGVMFGSPETTTGGNALKFYASVRLDIRRIGAIKEGDEVVGNETRVKVVKNKVAPPFKQAEFQIFYGAGISKEGELVDLGVKHKLIDKAGAWYSYNGEKIGQGKANVMKLFAENKAMAGEVEARLRELLLSGAVPVDDKAAPVEAEEFDAESEQEFE.

65–72 serves as a coordination point for ATP; sequence GPESSGKT.

Belongs to the RecA family.

The protein localises to the cytoplasm. In terms of biological role, can catalyze the hydrolysis of ATP in the presence of single-stranded DNA, the ATP-dependent uptake of single-stranded DNA by duplex DNA, and the ATP-dependent hybridization of homologous single-stranded DNAs. It interacts with LexA causing its activation and leading to its autocatalytic cleavage. This chain is Protein RecA, found in Aeromonas hydrophila subsp. hydrophila (strain ATCC 7966 / DSM 30187 / BCRC 13018 / CCUG 14551 / JCM 1027 / KCTC 2358 / NCIMB 9240 / NCTC 8049).